A 1440-amino-acid polypeptide reads, in one-letter code: Protein lin-15B (1440 aa).

4 disordered regions span residues 1–22 (MQTL…SSSS), 48–67 (ILRH…HLDA), 618–660 (PKEE…GRPI), and 738–769 (KDEP…PSSY). Low complexity predominate over residues 10 to 22 (TSNPASIPTSSSS). Positions 631–646 (STSSPATSSPTIIRPR) are enriched in low complexity. The segment covering 757–767 (NRTTASSQGPS) has biased composition (polar residues). The segment at 1135-1209 (NPGVCCFCSK…LLKGMIPDAA (75 aa)) adopts a THAP-type zinc-finger fold. 3 disordered regions span residues 1239–1281 (AIDL…EPSQ), 1298–1350 (RELS…GTSQ), and 1395–1440 (FADE…PSNE). The segment covering 1254-1264 (TQEEEEEEEYE) has biased composition (acidic residues). The a.T hook 1 DNA-binding region spans 1317-1329 (PNPRGRPRKYPKN). Residues 1396 to 1407 (ADEEEEEEEYEE) are compositionally biased toward acidic residues. The a.T hook 2 DNA-binding region spans 1418–1430 (GRPVGRPRKDANK).

Functionally, synthetic multivulva (synMuv) class B protein. SynMuv proteins are required to repress the induction of vulval development. Acts redundantly with SynMuv class A protein lin-15A to negatively regulate vulval development. Regulates let-23 basal activity. This chain is Protein lin-15B, found in Caenorhabditis elegans.